We begin with the raw amino-acid sequence, 200 residues long: NADH-quinone oxidoreductase subunit B (200 aa).

[4Fe-4S] cluster-binding residues include C78, C79, C144, and C174.

Belongs to the complex I 20 kDa subunit family. In terms of assembly, NDH-1 is composed of 14 different subunits. Subunits NuoB, C, D, E, F, and G constitute the peripheral sector of the complex. [4Fe-4S] cluster serves as cofactor.

Its subcellular location is the cell membrane. It carries out the reaction a quinone + NADH + 5 H(+)(in) = a quinol + NAD(+) + 4 H(+)(out). NDH-1 shuttles electrons from NADH, via FMN and iron-sulfur (Fe-S) centers, to quinones in the respiratory chain. The immediate electron acceptor for the enzyme in this species is believed to be ubiquinone. Couples the redox reaction to proton translocation (for every two electrons transferred, four hydrogen ions are translocated across the cytoplasmic membrane), and thus conserves the redox energy in a proton gradient. This is NADH-quinone oxidoreductase subunit B from Dehalococcoides mccartyi (strain ATCC BAA-2266 / KCTC 15142 / 195) (Dehalococcoides ethenogenes (strain 195)).